A 190-amino-acid chain; its full sequence is Cancer-related nucleoside-triphosphatase homolog (190 aa).

ATP is bound by residues 9 to 16 (GPPGVGKT) and 109 to 116 (VCIIDEIG). K165 carries the N6-acetyllysine modification.

It belongs to the THEP1 NTPase family. In terms of assembly, monomer.

It carries out the reaction a ribonucleoside 5'-triphosphate + H2O = a ribonucleoside 5'-diphosphate + phosphate + H(+). It catalyses the reaction 5-methyl-UTP + H2O = 5-methyl-UDP + phosphate + H(+). The enzyme catalyses CTP + H2O = CDP + phosphate + H(+). The catalysed reaction is ATP + H2O = ADP + phosphate + H(+). It carries out the reaction GTP + H2O = GDP + phosphate + H(+). Functionally, has nucleotide phosphatase activity towards ATP, GTP, CTP, TTP and UTP. Hydrolyzes nucleoside diphosphates with lower efficiency. The sequence is that of Cancer-related nucleoside-triphosphatase homolog from Mus musculus (Mouse).